Here is a 395-residue protein sequence, read N- to C-terminus: Elongation factor Tu (395 aa).

In terms of domain architecture, tr-type G spans 10–205; it reads KPHVNVGTIG…VDNDIPIPPR (196 aa). A G1 region spans residues 19–26; the sequence is GHVDHGKT. Residue 19 to 26 coordinates GTP; that stretch reads GHVDHGKT. A Mg(2+)-binding site is contributed by Thr26. The segment at 60-64 is G2; sequence GITIN. Residues 81–84 are G3; sequence DCPG. GTP contacts are provided by residues 81–85 and 136–139; these read DCPGH and NKVD. Positions 136-139 are G4; the sequence is NKVD. A G5 region spans residues 174–176; that stretch reads SAL.

This sequence belongs to the TRAFAC class translation factor GTPase superfamily. Classic translation factor GTPase family. EF-Tu/EF-1A subfamily. Monomer.

The protein resides in the cytoplasm. The catalysed reaction is GTP + H2O = GDP + phosphate + H(+). Its function is as follows. GTP hydrolase that promotes the GTP-dependent binding of aminoacyl-tRNA to the A-site of ribosomes during protein biosynthesis. This is Elongation factor Tu from Cytophaga hutchinsonii (strain ATCC 33406 / DSM 1761 / CIP 103989 / NBRC 15051 / NCIMB 9469 / D465).